The following is a 274-amino-acid chain: NADPH-dependent 7-cyano-7-deazaguanine reductase (274 aa).

80 to 82 (VES) provides a ligand contact to substrate. Residue 82–83 (SK) coordinates NADPH. Residue Cys181 is the Thioimide intermediate of the active site. The Proton donor role is filled by Asp188. Position 220 to 221 (220 to 221 (HE)) interacts with substrate. Residue 249–250 (RG) participates in NADPH binding.

Belongs to the GTP cyclohydrolase I family. QueF type 2 subfamily. Homodimer.

It is found in the cytoplasm. The catalysed reaction is 7-aminomethyl-7-carbaguanine + 2 NADP(+) = 7-cyano-7-deazaguanine + 2 NADPH + 3 H(+). The protein operates within tRNA modification; tRNA-queuosine biosynthesis. Its function is as follows. Catalyzes the NADPH-dependent reduction of 7-cyano-7-deazaguanine (preQ0) to 7-aminomethyl-7-deazaguanine (preQ1). This Burkholderia pseudomallei (strain 1710b) protein is NADPH-dependent 7-cyano-7-deazaguanine reductase.